A 462-amino-acid chain; its full sequence is MQKTWSDRFEEGLNPFIESFNASINFDFLLIEEDLDGSIAHARMLAKTGIITSEEADQLEAALQKIRLEASQGLFKPDISDEDVHMSVERRLISILGPLGKKLHTARSRNDQVGTDLRLWLRRRIDDIDIELKKLQVALFKKAEKNLLTLIPGYTHLQRAQPLSLAHHLLAYIEMLQRDRNRLADVRERVNICPLGAAALAGTSLPIDRAFTANQLGFTSIYSNSLDAVSDRDFTVEFTAAASLIMTHISRLADEIILWASEEFSFVRLTDRCSTGSSLMPQKKNPDVPELVRGKTGRVFGHLQSLLTMMKGLPLAYNKDFQEDKEAVFDTVKTVRDSLKAMTILLEEGLEFSLERLKETVEADFSNATDVADYLVSKNIPFREAYQIVGRVVRLCIQKKILLKDLTLKEWQEINTLIDHDIYEKITPEKVVAARISDGGTGFDRVREELEKWRNDLISLNQ.

The protein belongs to the lyase 1 family. Argininosuccinate lyase subfamily.

It localises to the cytoplasm. The enzyme catalyses 2-(N(omega)-L-arginino)succinate = fumarate + L-arginine. It participates in amino-acid biosynthesis; L-arginine biosynthesis; L-arginine from L-ornithine and carbamoyl phosphate: step 3/3. The chain is Argininosuccinate lyase from Prochlorococcus marinus (strain SARG / CCMP1375 / SS120).